A 292-amino-acid chain; its full sequence is 4-hydroxy-tetrahydrodipicolinate synthase (292 aa).

Thr-45 lines the pyruvate pocket. Tyr-133 acts as the Proton donor/acceptor in catalysis. Lys-161 serves as the catalytic Schiff-base intermediate with substrate. Ile-203 contacts pyruvate.

The protein belongs to the DapA family. As to quaternary structure, homotetramer; dimer of dimers.

Its subcellular location is the cytoplasm. It carries out the reaction L-aspartate 4-semialdehyde + pyruvate = (2S,4S)-4-hydroxy-2,3,4,5-tetrahydrodipicolinate + H2O + H(+). The protein operates within amino-acid biosynthesis; L-lysine biosynthesis via DAP pathway; (S)-tetrahydrodipicolinate from L-aspartate: step 3/4. In terms of biological role, catalyzes the condensation of (S)-aspartate-beta-semialdehyde [(S)-ASA] and pyruvate to 4-hydroxy-tetrahydrodipicolinate (HTPA). The chain is 4-hydroxy-tetrahydrodipicolinate synthase from Sodalis glossinidius (strain morsitans).